Consider the following 346-residue polypeptide: MTKGKLLTTPSRLLKLVLPLSTVDHNTDRKDVAPLALLVHPQQPLSYLERLIQAELPPPDPQDSKSTTRSVTFRAMEAKDDEIKPRKKADTEGGGGSDGSVQSYSGAGREGEGKDEGEFVRWSPSTEIGDFIRDAARAKEFEVEIEGSPGVIKVAVPSFNDRTYYLRQRLRRTSRKISKLAAIKEECDKAAHRGAQRIALAGCGGLIGYWYIVYRLTFETDLGWDVMEPVTYLVGLSTLIGGYMWFLWHNREVSYRSALNITVSARQNKLYQAKGFSLQDWEGYLEEANAMRREIKAVASEYDVDWNETQDEGGDEKVTKALRDERKNNNGTKNKSKEGEEDDEDD.

Residues 1–195 (MTKGKLLTTP…ECDKAAHRGA (195 aa)) are Mitochondrial matrix-facing. The segment at 55-120 (ELPPPDPQDS…GEGKDEGEFV (66 aa)) is disordered. Basic and acidic residues-rich tracts occupy residues 76-91 (MEAK…KADT) and 109-119 (REGEGKDEGEF). The chain crosses the membrane as a helical span at residues 196–216 (QRIALAGCGGLIGYWYIVYRL). At 217 to 226 (TFETDLGWDV) the chain is on the mitochondrial intermembrane side. The Selectivity filter motif lies at 224–232 (WDVMEPVTY). The chain crosses the membrane as a helical span at residues 227 to 248 (MEPVTYLVGLSTLIGGYMWFLW). Glutamate 228 serves as a coordination point for Ca(2+). At 249–346 (HNREVSYRSA…KEGEEDDEDD (98 aa)) the chain is on the mitochondrial matrix side. Positions 306-346 (WNETQDEGGDEKVTKALRDERKNNNGTKNKSKEGEEDDEDD) are disordered. The span at 315–328 (DEKVTKALRDERKN) shows a compositional bias: basic and acidic residues.

It belongs to the MCU (TC 1.A.77) family. As to quaternary structure, homotetramer, assembles in a dimer or dimers configuration with two interfaces.

Its subcellular location is the mitochondrion inner membrane. The enzyme catalyses Ca(2+)(in) = Ca(2+)(out). Its function is as follows. Highly selective calcium channel localized to the inner mitochondrial membrane, which mediates calcium uptake into the mitochondrial matrix. Mitochondrial calcium homeostasis plays key roles in cellular physiology and regulates ATP production, cytoplasmic calcium signals and activation of cell death pathways. Sufficient to operate as a pore-forming channel without the need of calcium-sensor or auxiliary subunit. In Cyphellophora europaea (strain CBS 101466) (Phialophora europaea), this protein is Calcium uniporter protein, mitochondrial.